Reading from the N-terminus, the 190-residue chain is Protein LZIC (190 aa).

Residues 6-64 (TTETSKLKQNLEEQLDRLMQQLQDLEECREELDADEYEETKKETLEQLSEINDSLKKIM) are a coiled coil.

Belongs to the CTNNBIP1 family. As to quaternary structure, does not interact with CTNNB1.

In Gallus gallus (Chicken), this protein is Protein LZIC (LZIC).